The following is a 788-amino-acid chain: MRVPESWLREFVDLDWDIEQIAERLTFSGTSVEDILRPFNVSGEIITARVIERFDHPASEKLIVCKVDTGKRIYTVITADKTVNEGDYVILALEGATLNNGLKIEPREFKGVISEGMLCSLEELGLEEKSDRVYRFPDPVELGVNVVEEYGLNERVLDIEITPNRPDCLSIIGVARELSALSGRPLNKPQPDVSFVDEDVQFDVEIEDVEGCPRYSARIMKGVTVKDSPLWMKARLVAAGVRSLNNVVDATNYVMIELGHPVHAFDLNRLKNKRIVVKSAKGGERVLLLDEKEYELKGGEVLITDGENVLALGGIMGGMESGVYDDTRDLVLEVAYFDPVRIRKAAKALGISSESSYRFERGVDPNDVELVSLRLAELIQKLAGGYVLRKFWDVYPRKIEPKKVMLRKARIEKILGTKVEEPGDILRRLEFQVEDRGDSYEVLVPTFRPDVEREIDLIEEIGRIYGYEKVESKVISVPAVNRGWGEKQLFRREISQFMKGMGFDEVVTFSFVDSQKVKKWPLVDREPIALSNPIASDMDVMRTSQFYSLIQVLAENFKRQNRDLKLFEIGKIYFKENGNFREIETLSAMSCGLENPGDYTDKRSVSFYTIKGVLDELFFRLGVNVVYRAAEIPGLFPTRSARIYVENREIGFIGMVDPKLLDEYDVKEDTYFFEIDMELLRKYASKRPAYRPTPRFPAVRRDISFLLPKGFESVKIIELFKKSGGDLVEEVGVFDIYEGKGIPENMVSVTLYVVFRHPERTLTDEEVNKIFEEMVQKAEREFGIRRRF.

Residues 39-147 (FNVSGEIITA…DPVELGVNVV (109 aa)) enclose the tRNA-binding domain. Positions 399-472 (IEPKKVMLRK…RIYGYEKVES (74 aa)) constitute a B5 domain. The Mg(2+) site is built by Asp-450, Asp-456, Glu-459, and Glu-460. The FDX-ACB domain occupies 694–787 (PRFPAVRRDI…AEREFGIRRR (94 aa)).

Belongs to the phenylalanyl-tRNA synthetase beta subunit family. Type 1 subfamily. In terms of assembly, tetramer of two alpha and two beta subunits. It depends on Mg(2+) as a cofactor.

It localises to the cytoplasm. The catalysed reaction is tRNA(Phe) + L-phenylalanine + ATP = L-phenylalanyl-tRNA(Phe) + AMP + diphosphate + H(+). The chain is Phenylalanine--tRNA ligase beta subunit (pheT) from Thermotoga maritima (strain ATCC 43589 / DSM 3109 / JCM 10099 / NBRC 100826 / MSB8).